Consider the following 298-residue polypeptide: Small ribosomal subunit biogenesis GTPase RsgA (298 aa).

The 162-residue stretch at 67-228 (TNELVRPPIS…IADTPGFSSL (162 aa)) folds into the CP-type G domain. Residues 116-119 (TKMD) and 171-179 (GQSGVGKSS) contribute to the GTP site. Positions 252, 257, 259, and 265 each coordinate Zn(2+).

The protein belongs to the TRAFAC class YlqF/YawG GTPase family. RsgA subfamily. In terms of assembly, monomer. Associates with 30S ribosomal subunit, binds 16S rRNA. It depends on Zn(2+) as a cofactor.

The protein resides in the cytoplasm. One of several proteins that assist in the late maturation steps of the functional core of the 30S ribosomal subunit. Helps release RbfA from mature subunits. May play a role in the assembly of ribosomal proteins into the subunit. Circularly permuted GTPase that catalyzes slow GTP hydrolysis, GTPase activity is stimulated by the 30S ribosomal subunit. The polypeptide is Small ribosomal subunit biogenesis GTPase RsgA (Bacillus pumilus (strain SAFR-032)).